We begin with the raw amino-acid sequence, 224 residues long: UPF0758 protein NE1464 (224 aa).

An MPN domain is found at 102–224 (IMDSPQSVRN…VVSFAERGLI (123 aa)). Residues His173, His175, and Asp186 each contribute to the Zn(2+) site. The JAMM motif signature appears at 173-186 (HNHPSGIAEPSTAD).

The protein belongs to the UPF0758 family.

This is UPF0758 protein NE1464 from Nitrosomonas europaea (strain ATCC 19718 / CIP 103999 / KCTC 2705 / NBRC 14298).